We begin with the raw amino-acid sequence, 501 residues long: Acetylcholine receptor subunit beta (501 aa).

The first 23 residues, 1–23 (MALGALLLILGILGTPLAPGARG), serve as a signal peptide directing secretion. Residues 24–244 (SEAEGQLLKK…VIFYLIIRRK (221 aa)) are Extracellular-facing. The cysteines at positions 151 and 165 are disulfide-linked. Residue Asn164 is glycosylated (N-linked (GlcNAc...) asparagine). 3 consecutive transmembrane segments (helical) span residues 245 to 269 (PLFY…VFYL), 277 to 295 (MGLS…LLLA), and 311 to 332 (YLMF…VLNL). At 333–469 (HHRSPHTHQM…WQFVAMVVDR (137 aa)) the chain is on the cytoplasmic side. A disordered region spans residues 362 to 381 (RPKPERDQLPEPHHSFSPRS). Positions 363–375 (PKPERDQLPEPHH) are enriched in basic and acidic residues. Tyr390 carries the post-translational modification Phosphotyrosine; by Tyr-kinases. A helical transmembrane segment spans residues 470-488 (LFLWTFIVFTSVGTLVIFL).

The protein belongs to the ligand-gated ion channel (TC 1.A.9) family. Acetylcholine receptor (TC 1.A.9.1) subfamily. Beta-1/CHRNB1 sub-subfamily. In terms of assembly, pentamer of two alpha chains, and one each of the beta, delta, and gamma (in immature muscle) or epsilon (in mature muscle) chains. The muscle heteropentamer composed of alpha-1, beta-1, delta, epsilon subunits interacts with the alpha-conotoxin ImII.

The protein localises to the postsynaptic cell membrane. It is found in the cell membrane. The catalysed reaction is K(+)(in) = K(+)(out). It catalyses the reaction Na(+)(in) = Na(+)(out). Its function is as follows. After binding acetylcholine, the AChR responds by an extensive change in conformation that affects all subunits and leads to opening of an ion-conducting channel across the plasma membrane. The chain is Acetylcholine receptor subunit beta (Chrnb1) from Rattus norvegicus (Rat).